Here is a 786-residue protein sequence, read N- to C-terminus: Pentatricopeptide repeat-containing protein 10, chloroplastic (786 aa).

The disordered stretch occupies residues 1–71; it reads MEATGRGLFP…HQTPTPPHSF (71 aa). The N-terminal 95 residues, 1–95, are a transit peptide targeting the chloroplast; it reads MEATGRGLFP…HPLPTLAAFL (95 aa). Over residues 27–36 the composition is skewed to pro residues; it reads PAAPPPPSPS. The span at 37 to 50 shows a compositional bias: low complexity; the sequence is SLPLDSLLLHLTAP. PPR repeat units follow at residues 137–167, 173–207, 208–243, 244–278, 279–313, 314–348, 349–383, 384–418, 419–453, 454–488, 489–523, 524–558, 560–594, 595–629, 630–664, 666–700, 701–735, and 736–770; these read DASA…TPLP, DVRA…GVAP, TLVT…GVEP, DGFT…GHAP, CVVT…GCQP, DAVT…GLLP, NAFT…GFVP, NVNT…GCTP, NRVT…GVEL, SRDT…GFTP, CITT…GFKP, NEQS…GAVF, SWVI…GYNP, DLVI…GLSP, DLIT…QTMK, DVVS…GMAP, CAVT…GLKP, and MELT…DLDF.

It belongs to the PPR family. P subfamily. As to quaternary structure, forms homodimers.

It localises to the plastid. Its subcellular location is the chloroplast stroma. Its function is as follows. Involved in chloroplast mRNA stability. Binds specifically to two intergenic RNA regions of similar sequence located in the chloroplast atpH 5'-UTR and psaJ 3'-UTR, and serves as a barrier to RNA decay. Binding to a specific site in the intergenic region of the chloroplast atpH is sufficient to block 5'-3' and 3'-5' exonucleases. Acts as a protein barrier to block mRNA degradation by exonucleases, and defines processed mRNA termini in chloroplasts. Remodels the structure of the atpH ribosome-binding site in a manner that can account for its ability to enhance translation. Stabilizes a RNA 3'-end downstream from psaI. Binds atpH RNA as a monomer. This is Pentatricopeptide repeat-containing protein 10, chloroplastic from Zea mays (Maize).